The sequence spans 961 residues: MQDKRTVKVGTVADTAVGGRTKSLGVEVTDSVNSFGARNRVKVGDKSYQIYRLDAVPNTEKLPYSLKVLAENLLRNEDGSNITKDHIEAIANWDPKAGASIEIQYTPARVVMQDFTGVPCIVDLATMREAIADLGGNPEKVNPLAPADLVIDHSVIADLFGTADAFERNVEIEYQRNGERYQFLRWLQGAFSDFKVVPPRRIVHQVNIEYLARVVMERVGVAYPDTCVGTDSHTTMVNGLGVLGWGVGGIEAEAAMLGQPVSMLIPRVVGFKLTGEDPAPGAATDVVLTVTEICAKHGVVGKFVEFYGEGVAEVPLANRATLGNMSPEFGSTAAIFPIDQETIDYLKFTGRNAEQVALVETYAKEQGLWHDPAHEPAFSEYLELDLSQVVPSIAGPKRPQDRIALSQAKSVFREQIPSYVGDGDGQQGYSKLDEVVDETFPASDPGAPSNGHADDLPAVQSAAAHANGRPSNPVTVRSDELGEFVLDHGAVVIAAVTSCTNTSNPEVMLGAALLARQRVEKGLASKPWVKTTMAPGSQVVHDYYDKAGLWPYLEKLGFYLVGYGCTTCIGNSGPLPEEISKAINDNDLSVTAVLSGNRNFEGRINPDVKMNYPASPPLVVAYALAGTMTRLEKQPLGKDKDGNDVYLKDICRSQKTLGHHPIGDNSEWFTKNYADVFKGEQAWRNLPTPTRNTFEWSPDSTYVRKPPYFEGMPAEPEPVADISSARVVALLGDSVTTDHISPAGSIKPGTPAAQYLDDARRGPQGLQLFGCRRGNHEVMIRGTFANIRLRNLLHDDVAGGYTRDFTQDGGPQAFIYDAAQNYAAQNIPLVVLGGKEYGSGSSRDWAAKGTRLLGVRAVIAESFERIHRSNLIGMGVIPLQFPDGKSAKDLGLDGTEVFDITGIEELNKGKTPKTVHVKASKNGSDAAEFDAVVRIDTPGEADYYRNGGILQYVLRNMLKSG.

[4Fe-4S] cluster is bound by residues C499, C565, and C568.

This sequence belongs to the aconitase/IPM isomerase family. In terms of assembly, monomer. Requires [4Fe-4S] cluster as cofactor.

The catalysed reaction is citrate = D-threo-isocitrate. It carries out the reaction (2S,3R)-3-hydroxybutane-1,2,3-tricarboxylate = 2-methyl-cis-aconitate + H2O. It participates in carbohydrate metabolism; tricarboxylic acid cycle; isocitrate from oxaloacetate: step 2/2. The protein operates within organic acid metabolism; propanoate degradation. Its function is as follows. Involved in the catabolism of short chain fatty acids (SCFA) via the tricarboxylic acid (TCA)(acetyl degradation route) and probably via the 2-methylcitrate cycle I (propionate degradation route). Catalyzes the reversible isomerization of citrate to isocitrate via cis-aconitate. The apo form of AcnA functions as a RNA-binding regulatory protein. Could catalyze the hydration of 2-methyl-cis-aconitate to yield (2R,3S)-2-methylisocitrate. In Mycobacterium avium, this protein is Aconitate hydratase A (acn).